A 698-amino-acid chain; its full sequence is Epithelial sodium channel subunit alpha (698 aa).

Residues 1–70 (MLDHTRAPEL…SAPRQPTEEE (70 aa)) are disordered. The Cytoplasmic portion of the chain corresponds to 1–110 (MLDHTRAPEL…CSKHNRMKTA (110 aa)). Residues 111-131 (FWAVLWLCTFGMMYWQFALLF) traverse the membrane as a helical segment. Residues 132 to 589 (EEYLSYPVSL…SQWSLWFGSS (458 aa)) lie on the Extracellular side of the membrane. 3 cysteine pairs are disulfide-bonded: C158–C332, C256–C263, and C309–C316. An N-linked (GlcNAc...) asparagine glycan is attached at N190. The segment at 200-270 (RRRSSRDLLG…SDCFYQTYSS (71 aa)) is gating release of inhibition by proteolysis (GRIP); protease-sensitive region that is responsible for the proteolytic activation of the channel. Residues 213 to 243 (HPLQRLRTPPPPYSGRTARSGSSSVRDNNPQ) are disordered. Over residues 229 to 243 (TARSGSSSVRDNNPQ) the composition is skewed to polar residues. N-linked (GlcNAc...) asparagine glycosylation occurs at N259. 3 N-linked (GlcNAc...) asparagine glycosylation sites follow: N320, N339, and N424. Intrachain disulfides connect C421/C506, C443/C483, C443/C502, C447/C498, C456/C483, C456/C506, and C458/C472. Residue N538 is glycosylated (N-linked (GlcNAc...) asparagine). Residues 590–610 (VLSVVEMAELIFDLLVITLLM) form a helical membrane-spanning segment. The Cytoplasmic segment spans residues 611–698 (LLRRFRSRYW…DCSACALAAL (88 aa)). Residues 637-663 (ASSFPSRFCPHPTSPPPSLPQQGMTPP) form a disordered region. The PY motif; recruits WW domain-containing proteins and is thereby required for ubiquitination and inhibition of the channel by NEDD4 and NEDD4L motif lies at 669–673 (PPPAY).

Belongs to the amiloride-sensitive sodium channel (TC 1.A.6) family. SCNN1A subfamily. In terms of assembly, heterotrimer; containing an alpha/SCNN1A, a beta/SCNN1B and a gamma/SCNN1G subunit. Interacts with WWP1 (via WW domains). Interacts with WWP2 (via WW domains); inhibits the channel. Interacts with BPIFA1; the interaction is indirect via SCNN1B and inhibits the proteolytic processing of SCNN1A and SCNN1G and the activation of ENaC. Interacts with the full-length immature form of PCSK9 (pro-PCSK9). Ubiquitinated. Can be ubiquitinated at multiple sites and undergo monoubiquitination and polyubiquitination. Ubiquitination by NEDD4 or NEDD4L inhibits the ENaC channel through endocytosis, intracellular retention and degradation of its individual subunits. In terms of processing, N-glycosylated. Post-translationally, ENaC is activated through the proteolytic maturation of its subunits. Furin cleaves the SCNN1A subunit, which results in a stepwise increase in the open probability of the channel due to the release of an inhibitory tract. BPIFA1, which is recruited by the SCNN1B subunit, prevents the proteolytic activation of ENaC. As to expression, detected in kidney, lung and testis (at protein level). In the testis, detected within the seminiferous tubules but not in the interstitial cells (at protein level).

It is found in the apical cell membrane. It localises to the cell projection. The protein resides in the cilium. The protein localises to the cytoplasmic granule. Its subcellular location is the cytoplasm. It is found in the cytoplasmic vesicle. It localises to the secretory vesicle. The protein resides in the acrosome. The protein localises to the flagellum. The catalysed reaction is Na(+)(in) = Na(+)(out). Originally identified and characterized by its inhibition by the diuretic drug amiloride. Functionally, this is one of the three pore-forming subunits of the heterotrimeric epithelial sodium channel (ENaC), a critical regulator of sodium balance and fluid homeostasis. ENaC operates in epithelial tissues, where it mediates the electrodiffusion of sodium ions from extracellular fluid through the apical membrane of cells, with water following osmotically. It plays a key role in maintaining sodium homeostasis through electrogenic sodium reabsorption in the kidneys. Additionally, ENaC is essential for airway surface liquid homeostasis, which is crucial for proper mucus clearance. The polypeptide is Epithelial sodium channel subunit alpha (Rattus norvegicus (Rat)).